We begin with the raw amino-acid sequence, 396 residues long: S-adenosylmethionine synthase 4 (396 aa).

Residue Glu-12 participates in Mg(2+) binding. An ATP-binding site is contributed by His-18. Glu-46 lines the K(+) pocket. L-methionine is bound by residues Glu-59 and Gln-102. ATP contacts are provided by residues 170–172, 238–241, Asp-249, 255–256, Ala-272, Lys-276, and Lys-280; these read DGK, SGRF, and RK. L-methionine is bound at residue Asp-249. Lys-280 is a binding site for L-methionine.

It belongs to the AdoMet synthase family. In terms of assembly, homotetramer. Requires Mn(2+) as cofactor. Mg(2+) is required as a cofactor. It depends on Co(2+) as a cofactor. The cofactor is K(+).

It is found in the cytoplasm. The catalysed reaction is L-methionine + ATP + H2O = S-adenosyl-L-methionine + phosphate + diphosphate. It participates in amino-acid biosynthesis; S-adenosyl-L-methionine biosynthesis; S-adenosyl-L-methionine from L-methionine: step 1/1. Functionally, catalyzes the formation of S-adenosylmethionine from methionine and ATP. The reaction comprises two steps that are both catalyzed by the same enzyme: formation of S-adenosylmethionine (AdoMet) and triphosphate, and subsequent hydrolysis of the triphosphate. This chain is S-adenosylmethionine synthase 4 (SAM4), found in Hordeum vulgare (Barley).